The primary structure comprises 127 residues: uncharacterized protein (127 aa).

It is found in the mitochondrion. This is an uncharacterized protein from Arabidopsis thaliana (Mouse-ear cress).